We begin with the raw amino-acid sequence, 299 residues long: Leucine zipper transcription factor-like protein 1 (299 aa).

Positions 145-299 (GTTELLNKEI…KRLAKYESED (155 aa)) are interaction with BSS9. The stretch at 145-299 (GTTELLNKEI…KRLAKYESED (155 aa)) forms a coiled coil.

Belongs to the LZTFL1 family. Self-associates. Interacts with BBS9; the interaction mediates the association of LZTL1 with the BBsome complex and regulates BBSome ciliary trafficking.

It localises to the cytoplasm. In terms of biological role, regulates ciliary localization of the BBSome complex. Together with the BBSome complex, controls SMO ciliary trafficking and contributes to the sonic hedgehog (SHH) pathway regulation. May play a role in neurite outgrowth. May have tumor suppressor function. In Rattus norvegicus (Rat), this protein is Leucine zipper transcription factor-like protein 1 (Lztfl1).